The following is a 103-amino-acid chain: SOSS complex subunit C (103 aa).

The protein belongs to the SOSS-C family. In terms of assembly, belongs to the multiprotein complex Integrator. Component of the SOSS complex, composed of soss-b (soss-b1/nabp2 or soss-b2/nabp1), soss-a/ints3 and soss-c/inip.

Its subcellular location is the nucleus. In terms of biological role, component of the SOSS complex, a multiprotein complex that functions downstream of the MRN complex to promote DNA repair and G2/M checkpoint. The SOSS complex associates with single-stranded DNA at DNA lesions and influences diverse endpoints in the cellular DNA damage response including cell-cycle checkpoint activation, recombinational repair and maintenance of genomic stability. Required for efficient homologous recombination-dependent repair of double-strand breaks (DSBs). This is SOSS complex subunit C (inip) from Danio rerio (Zebrafish).